The sequence spans 24 residues: Positive regulator of RepFIC repA1 expression (24 aa).

The polypeptide is Positive regulator of RepFIC repA1 expression (repL) (Escherichia coli).